Consider the following 422-residue polypeptide: Histidine--tRNA ligase (422 aa).

Belongs to the class-II aminoacyl-tRNA synthetase family. Homodimer.

The protein resides in the cytoplasm. The catalysed reaction is tRNA(His) + L-histidine + ATP = L-histidyl-tRNA(His) + AMP + diphosphate + H(+). The chain is Histidine--tRNA ligase from Vibrio vulnificus (strain CMCP6).